Reading from the N-terminus, the 390-residue chain is MAQRYDDLPHYGGMDGVGIPSTMYGDPHAARSMQPVHHLNHGPPLHSHQYPHTAHTNAMAPSMGSSVNDALKRDKDAIYGHPLFPLLALIFEKCELATCTPREPGVAGGDVCSSESFNEDIAVFAKQIRAEKPLFSSNPELDNLMIQAIQVLRFHLLELEKVHELCDNFCHRYISCLKGKMPIDLVIDDREGGSKSDSEDVTRSANLTDQPSWNRDHDDTASTRSGGTPGPSSGGHTSHSGDNSSEQGDGLDNSVASPSTGDDDDPDKDKKRHKKRGIFPKVATNIMRAWLFQHLTHPYPSEEQKKQLAQDTGLTILQVNNWFINARRRIVQPMIDQSNRAVSQGTPYNPDGQPMGGFVMDGQQHMGIRAPGPMSGMGMNMGMEGQWHYM.

Residues 108-192 (GGDVCSSESF…IDLVIDDREG (85 aa)) form the MEIS N-terminal domain. Positions 190–202 (REGGSKSDSEDVT) are enriched in basic and acidic residues. Residues 190-279 (REGGSKSDSE…KKRHKKRGIF (90 aa)) are disordered. Residues 203–213 (RSANLTDQPSW) show a composition bias toward polar residues. A DNA-binding region (homeobox; TALE-type) is located at residues 272–334 (RHKKRGIFPK…NARRRIVQPM (63 aa)). Residues 299–329 (YPSEEQKKQLAQDTGLTILQVNNWFINARRR) form an interaction with DNA region. Positions 335-390 (IDQSNRAVSQGTPYNPDGQPMGGFVMDGQQHMGIRAPGPMSGMGMNMGMEGQWHYM) are required for transcriptional activation.

Belongs to the TALE/MEIS homeobox family. As to quaternary structure, interacts with the N-terminal region of PBX1 to form a heterodimer which binds DNA including a cAMP-responsive sequence in CYP17. Also forms heterodimers with PBX2. Forms heterotrimers with PBX1 or PBX2 and a number of HOX proteins including HOXA9, HOXD4 and HOXD9 where it acts as a non-DNA-binding partner. Also forms heterotrimers with PBX1 and HOX proteins including HOXD9 and HOXD10 where PBX1 is the non-DNA-binding partner. Heterodimer with DLX3. Heterodimer with HOXB13. In terms of tissue distribution, expressed at high levels in the lung with lower levels detected in the heart and brain. Expressed in pancreatic islets (beta-cells and non-beta-cells).

It is found in the nucleus. Acts as a transcriptional regulator of PAX6. Also acts as a transcriptional activator of PF4 in complex with PBX1 or PBX2. Required for hematopoiesis, megakaryocyte lineage development and vascular patterning. May function as a cofactor for HOXA7 and HOXA9 in the induction of myeloid leukemias. The protein is Homeobox protein Meis1 (Meis1) of Mus musculus (Mouse).